Here is a 413-residue protein sequence, read N- to C-terminus: Multifunctional CCA protein (413 aa).

2 residues coordinate ATP: G8 and R11. CTP is bound by residues G8 and R11. 2 residues coordinate Mg(2+): D21 and D23. Positions 91, 137, and 140 each coordinate ATP. Residues R91, R137, and R140 each contribute to the CTP site. In terms of domain architecture, HD spans 228–329 (TGVHTLMTLS…VKLFDAIDAW (102 aa)).

Belongs to the tRNA nucleotidyltransferase/poly(A) polymerase family. Bacterial CCA-adding enzyme type 1 subfamily. As to quaternary structure, monomer. Can also form homodimers and oligomers. Mg(2+) serves as cofactor. It depends on Ni(2+) as a cofactor.

It catalyses the reaction a tRNA precursor + 2 CTP + ATP = a tRNA with a 3' CCA end + 3 diphosphate. It carries out the reaction a tRNA with a 3' CCA end + 2 CTP + ATP = a tRNA with a 3' CCACCA end + 3 diphosphate. Catalyzes the addition and repair of the essential 3'-terminal CCA sequence in tRNAs without using a nucleic acid template. Adds these three nucleotides in the order of C, C, and A to the tRNA nucleotide-73, using CTP and ATP as substrates and producing inorganic pyrophosphate. tRNA 3'-terminal CCA addition is required both for tRNA processing and repair. Also involved in tRNA surveillance by mediating tandem CCA addition to generate a CCACCA at the 3' terminus of unstable tRNAs. While stable tRNAs receive only 3'-terminal CCA, unstable tRNAs are marked with CCACCA and rapidly degraded. This is Multifunctional CCA protein from Salmonella paratyphi A (strain ATCC 9150 / SARB42).